Consider the following 460-residue polypeptide: Adenylosuccinate lyase (460 aa).

N(6)-(1,2-dicarboxyethyl)-AMP contacts are provided by residues 15 to 16, 88 to 90, and 120 to 121; these read RY, NHD, and TS. The active-site Proton donor/acceptor is the His169. Gln245 contacts N(6)-(1,2-dicarboxyethyl)-AMP. The Proton donor/acceptor role is filled by Ser293. N(6)-(1,2-dicarboxyethyl)-AMP is bound by residues Ser294, 299 to 301, Asn307, Arg333, and 338 to 342; these read KIN and STVLR.

This sequence belongs to the lyase 1 family. Adenylosuccinate lyase subfamily. In terms of assembly, homotetramer. Residues from neighboring subunits contribute catalytic and substrate-binding residues to each active site.

It catalyses the reaction N(6)-(1,2-dicarboxyethyl)-AMP = fumarate + AMP. The enzyme catalyses (2S)-2-[5-amino-1-(5-phospho-beta-D-ribosyl)imidazole-4-carboxamido]succinate = 5-amino-1-(5-phospho-beta-D-ribosyl)imidazole-4-carboxamide + fumarate. The protein operates within purine metabolism; AMP biosynthesis via de novo pathway; AMP from IMP: step 2/2. Its pathway is purine metabolism; IMP biosynthesis via de novo pathway; 5-amino-1-(5-phospho-D-ribosyl)imidazole-4-carboxamide from 5-amino-1-(5-phospho-D-ribosyl)imidazole-4-carboxylate: step 2/2. Functionally, catalyzes two reactions in de novo purine nucleotide biosynthesis. Catalyzes the breakdown of 5-aminoimidazole- (N-succinylocarboxamide) ribotide (SAICAR or 2-[5-amino-1-(5-phospho-beta-D-ribosyl)imidazole-4-carboxamido]succinate) to 5-aminoimidazole-4-carboxamide ribotide (AICAR or 5-amino-1-(5-phospho-beta-D-ribosyl)imidazole-4-carboxamide) and fumarate, and of adenylosuccinate (ADS or N(6)-(1,2-dicarboxyethyl)-AMP) to adenosine monophosphate (AMP) and fumarate. The chain is Adenylosuccinate lyase (purB) from Buchnera aphidicola subsp. Baizongia pistaciae (strain Bp).